Here is a 312-residue protein sequence, read N- to C-terminus: Putative HTH-type transcriptional regulatory protein Ta1363 (312 aa).

The HTH cro/C1-type domain maps to 133–186 (LREMRMKMSLSIGYLSHYLGVSRRSVSLYENGSSATIDVFLKLQEIIKSDLVDH). Residues 144–163 (IGYLSHYLGVSRRSVSLYEN) constitute a DNA-binding region (H-T-H motif).

The sequence is that of Putative HTH-type transcriptional regulatory protein Ta1363 from Thermoplasma acidophilum (strain ATCC 25905 / DSM 1728 / JCM 9062 / NBRC 15155 / AMRC-C165).